We begin with the raw amino-acid sequence, 184 residues long: Endoribonuclease YbeY (184 aa).

Positions 118, 122, and 128 each coordinate Zn(2+). The interval 156-184 (YHQDRQSQKDQRLLDKSRYFDELNHGDTP) is disordered. Residues 157–184 (HQDRQSQKDQRLLDKSRYFDELNHGDTP) are compositionally biased toward basic and acidic residues.

The protein belongs to the endoribonuclease YbeY family. It depends on Zn(2+) as a cofactor.

It localises to the cytoplasm. In terms of biological role, single strand-specific metallo-endoribonuclease involved in late-stage 70S ribosome quality control and in maturation of the 3' terminus of the 16S rRNA. The polypeptide is Endoribonuclease YbeY (Mycolicibacterium vanbaalenii (strain DSM 7251 / JCM 13017 / BCRC 16820 / KCTC 9966 / NRRL B-24157 / PYR-1) (Mycobacterium vanbaalenii)).